Here is a 498-residue protein sequence, read N- to C-terminus: Trehalose-6-phosphate synthase (498 aa).

Residue Arg28 coordinates D-glucose 6-phosphate. A UDP-alpha-D-glucose-binding site is contributed by 48-49 (GG). The D-glucose 6-phosphate site is built by Tyr106 and Asp160. The UDP-alpha-D-glucose site is built by Arg302 and Lys307. Arg340 is a binding site for D-glucose 6-phosphate. 405 to 409 (LVAKE) contributes to the UDP-alpha-D-glucose binding site.

The protein belongs to the glycosyltransferase 20 family. Homotetramer.

The catalysed reaction is ADP-alpha-D-glucose + D-glucose 6-phosphate = alpha,alpha-trehalose 6-phosphate + ADP + H(+). It catalyses the reaction CDP-alpha-D-glucose + D-glucose 6-phosphate = alpha,alpha-trehalose 6-phosphate + CDP + H(+). It carries out the reaction GDP-alpha-D-glucose + D-glucose 6-phosphate = alpha,alpha-trehalose 6-phosphate + GDP + H(+). The enzyme catalyses TDP-alpha-D-glucose + D-glucose 6-phosphate = 5-methyl-UDP + alpha,alpha-trehalose 6-phosphate + H(+). The catalysed reaction is D-glucose 6-phosphate + UDP-alpha-D-glucose = alpha,alpha-trehalose 6-phosphate + UDP + H(+). The protein operates within glycan biosynthesis; trehalose biosynthesis. Its function is as follows. Probably involved in the osmoprotection via the biosynthesis of trehalose and in the production of glycogen and alpha-glucan via the TreS-Pep2 branch involved in the biosynthesis of maltose-1-phosphate (M1P). Catalyzes the transfer of glucose from UDP-glucose (UDP-Glc) to D-glucose 6-phosphate (Glc-6-P) to form trehalose-6-phosphate. Probably also able to use ADP-Glc, CDP-Glc, GDP-Glc and TDP-Glc as glucosyl donors. The polypeptide is Trehalose-6-phosphate synthase (Mycobacterium leprae (strain TN)).